The following is a 393-amino-acid chain: Protein FAM47E (393 aa).

A coiled-coil region spans residues 326 to 354 (VSHKAQEENFKKELQEQEELLADLHGTVA).

Belongs to the FAM47 family. In terms of assembly, interacts with PRMT5; the interaction is direct. Interacts with WDR77.

Its subcellular location is the nucleus. The protein resides in the chromosome. It localises to the cytoplasm. Functionally, promotes histone methylation by localizing the arginine methyltransferase PRMT5 to chromatin. In Homo sapiens (Human), this protein is Protein FAM47E (FAM47E).